A 368-amino-acid polypeptide reads, in one-letter code: Quinolinate synthase (368 aa).

Residues H46 and S63 each contribute to the iminosuccinate site. C110 provides a ligand contact to [4Fe-4S] cluster. Iminosuccinate contacts are provided by residues 141 to 143 (YVN) and S162. C230 is a [4Fe-4S] cluster binding site. Iminosuccinate contacts are provided by residues 256 to 258 (HPE) and T273. C320 is a binding site for [4Fe-4S] cluster.

The protein belongs to the quinolinate synthase family. Type 3 subfamily. The cofactor is [4Fe-4S] cluster.

It localises to the cytoplasm. It catalyses the reaction iminosuccinate + dihydroxyacetone phosphate = quinolinate + phosphate + 2 H2O + H(+). It participates in cofactor biosynthesis; NAD(+) biosynthesis; quinolinate from iminoaspartate: step 1/1. Its function is as follows. Catalyzes the condensation of iminoaspartate with dihydroxyacetone phosphate to form quinolinate. In Bacillus thuringiensis subsp. konkukian (strain 97-27), this protein is Quinolinate synthase.